Consider the following 467-residue polypeptide: F-box/kelch-repeat protein SKIP11 (467 aa).

The interval 77 to 117 (LSGGEEQADAAIGDGSSSRQEQEQQSDFNDNGGDSSDSHSL) is disordered. The span at 92-111 (SSSRQEQEQQSDFNDNGGDS) shows a compositional bias: low complexity. Residues 116 to 163 (SLINEIGRDNSIDCLIRCSRSDYGSIASLNRNFRSLVKSGEIYRLRRQ) form the F-box domain. Kelch repeat units follow at residues 159-210 (RLRR…KESL), 215-259 (DLLV…SLGE), 261-307 (AIFA…FMDG), 308-356 (KFYV…DMSP), and 365-411 (AVVN…GLAF).

As to quaternary structure, part of a SCF (ASK-cullin-F-box) protein ligase complex. Interacts with SKP1A/ASK1 and SPK1B/ASK2.

It is found in the nucleus. It functions in the pathway protein modification; protein ubiquitination. Functionally, component of SCF(ASK-cullin-F-box) E3 ubiquitin ligase complexes, which may mediate the ubiquitination and subsequent proteasomal degradation of target proteins. In Arabidopsis thaliana (Mouse-ear cress), this protein is F-box/kelch-repeat protein SKIP11 (SKIP11).